The chain runs to 193 residues: Holliday junction branch migration complex subunit RuvA (193 aa).

The interval 1 to 63 is domain I; it reads MYAYLKGKIM…EDAQLLYGFK (63 aa). Positions 64-141 are domain II; that stretch reads DEEEKAMFNA…TITDESELFK (78 aa). The flexible linker stretch occupies residues 141–142; that stretch reads KE. Residues 143-193 form a domain III region; it reads VNDTLLNEALLAFEALGYSKREITKIEKELKKKQFSTVDEYVKQGLQMFVS.

This sequence belongs to the RuvA family. In terms of assembly, homotetramer. Forms an RuvA(8)-RuvB(12)-Holliday junction (HJ) complex. HJ DNA is sandwiched between 2 RuvA tetramers; dsDNA enters through RuvA and exits via RuvB. An RuvB hexamer assembles on each DNA strand where it exits the tetramer. Each RuvB hexamer is contacted by two RuvA subunits (via domain III) on 2 adjacent RuvB subunits; this complex drives branch migration. In the full resolvosome a probable DNA-RuvA(4)-RuvB(12)-RuvC(2) complex forms which resolves the HJ.

Its subcellular location is the cytoplasm. The RuvA-RuvB-RuvC complex processes Holliday junction (HJ) DNA during genetic recombination and DNA repair, while the RuvA-RuvB complex plays an important role in the rescue of blocked DNA replication forks via replication fork reversal (RFR). RuvA specifically binds to HJ cruciform DNA, conferring on it an open structure. The RuvB hexamer acts as an ATP-dependent pump, pulling dsDNA into and through the RuvAB complex. HJ branch migration allows RuvC to scan DNA until it finds its consensus sequence, where it cleaves and resolves the cruciform DNA. This is Holliday junction branch migration complex subunit RuvA from Macrococcus caseolyticus (strain JCSC5402) (Macrococcoides caseolyticum).